A 218-amino-acid polypeptide reads, in one-letter code: Recombination protein RecR (218 aa).

The C4-type zinc finger occupies 56–71 (CRICCNISREEVCRIC). In terms of domain architecture, Toprim spans 79–195 (STICVVEEPK…VVSRLASGMP (117 aa)).

It belongs to the RecR family.

Its function is as follows. May play a role in DNA repair. It seems to be involved in an RecBC-independent recombinational process of DNA repair. It may act with RecF and RecO. The chain is Recombination protein RecR from Corynebacterium diphtheriae (strain ATCC 700971 / NCTC 13129 / Biotype gravis).